A 209-amino-acid chain; its full sequence is Probable spore germination lipoprotein YlaJ (209 aa).

Positions 1-16 (MRILFIIIQLTLILSA) are cleaved as a signal peptide. A lipid anchor (N-palmitoyl cysteine) is attached at cysteine 17. Cysteine 17 is lipidated: S-diacylglycerol cysteine. 2 disordered regions span residues 26–54 (QNVE…KDNG) and 165–209 (NDVI…NNND). Composition is skewed to basic and acidic residues over residues 28-54 (VEKE…KDNG) and 183-209 (LNRK…NNND).

It localises to the forespore inner membrane. Its function is as follows. Probably contributes, directly or indirectly, to early events in germination. This is Probable spore germination lipoprotein YlaJ (ylaJ) from Bacillus subtilis (strain 168).